The chain runs to 277 residues: Large ribosomal subunit protein uL2 (277 aa).

The tract at residues 222-277 (GVAMNPVDHPHGGGEGRTSGGRHPVTPWGKPTKGKKTRSNKATDKFIMRSRHQRKK) is disordered.

Belongs to the universal ribosomal protein uL2 family. As to quaternary structure, part of the 50S ribosomal subunit. Forms a bridge to the 30S subunit in the 70S ribosome.

In terms of biological role, one of the primary rRNA binding proteins. Required for association of the 30S and 50S subunits to form the 70S ribosome, for tRNA binding and peptide bond formation. It has been suggested to have peptidyltransferase activity; this is somewhat controversial. Makes several contacts with the 16S rRNA in the 70S ribosome. This chain is Large ribosomal subunit protein uL2, found in Brucella ovis (strain ATCC 25840 / 63/290 / NCTC 10512).